The following is a 321-amino-acid chain: Urease accessory protein UreD (321 aa).

The protein belongs to the UreD family. As to quaternary structure, ureD, UreF and UreG form a complex that acts as a GTP-hydrolysis-dependent molecular chaperone, activating the urease apoprotein by helping to assemble the nickel containing metallocenter of UreC. The UreE protein probably delivers the nickel.

The protein resides in the cytoplasm. Functionally, required for maturation of urease via the functional incorporation of the urease nickel metallocenter. The polypeptide is Urease accessory protein UreD (Yersinia pseudotuberculosis serotype O:1b (strain IP 31758)).